The sequence spans 120 residues: NAD(P)H-quinone oxidoreductase subunit 3 (120 aa).

3 consecutive transmembrane segments (helical) span residues 6 to 26 (GYDAFLGFLLISAAVPVLALV), 64 to 84 (MFALVFVIFDVETVFLYPWAV), and 89 to 109 (LGLLAFIEALIFIAILIVALA).

The protein belongs to the complex I subunit 3 family. NDH-1 can be composed of about 15 different subunits; different subcomplexes with different compositions have been identified which probably have different functions.

It localises to the cellular thylakoid membrane. The enzyme catalyses a plastoquinone + NADH + (n+1) H(+)(in) = a plastoquinol + NAD(+) + n H(+)(out). It catalyses the reaction a plastoquinone + NADPH + (n+1) H(+)(in) = a plastoquinol + NADP(+) + n H(+)(out). In terms of biological role, NDH-1 shuttles electrons from an unknown electron donor, via FMN and iron-sulfur (Fe-S) centers, to quinones in the respiratory and/or the photosynthetic chain. The immediate electron acceptor for the enzyme in this species is believed to be plastoquinone. Couples the redox reaction to proton translocation, and thus conserves the redox energy in a proton gradient. Cyanobacterial NDH-1 also plays a role in inorganic carbon-concentration. This is NAD(P)H-quinone oxidoreductase subunit 3 from Prochlorococcus marinus (strain MIT 9211).